We begin with the raw amino-acid sequence, 969 residues long: Leucine--tRNA ligase (969 aa).

A 'HIGH' region motif is present at residues 45-55 (PYTNAPLHIGH). Positions 649–653 (KMSKS) match the 'KMSKS' region motif. K652 is an ATP binding site.

Belongs to the class-I aminoacyl-tRNA synthetase family.

It localises to the cytoplasm. It catalyses the reaction tRNA(Leu) + L-leucine + ATP = L-leucyl-tRNA(Leu) + AMP + diphosphate. The protein is Leucine--tRNA ligase of Staphylothermus marinus (strain ATCC 43588 / DSM 3639 / JCM 9404 / F1).